Consider the following 500-residue polypeptide: Glycerol kinase (500 aa).

Thr12 serves as a coordination point for ADP. 3 residues coordinate ATP: Thr12, Thr13, and Ser14. Thr12 provides a ligand contact to sn-glycerol 3-phosphate. Arg16 contacts ADP. Sn-glycerol 3-phosphate contacts are provided by Arg82, Glu83, Tyr134, and Asp244. Glycerol contacts are provided by Arg82, Glu83, Tyr134, Asp244, and Gln245. Residues Thr266 and Gly309 each coordinate ADP. Residues Thr266, Gly309, Gln313, and Gly410 each coordinate ATP. 2 residues coordinate ADP: Gly410 and Asn414.

It belongs to the FGGY kinase family. Homotetramer and homodimer (in equilibrium).

It carries out the reaction glycerol + ATP = sn-glycerol 3-phosphate + ADP + H(+). It participates in polyol metabolism; glycerol degradation via glycerol kinase pathway; sn-glycerol 3-phosphate from glycerol: step 1/1. With respect to regulation, activated by phosphorylation and inhibited by fructose 1,6-bisphosphate (FBP). Its function is as follows. Key enzyme in the regulation of glycerol uptake and metabolism. Catalyzes the phosphorylation of glycerol to yield sn-glycerol 3-phosphate. The protein is Glycerol kinase of Alkaliphilus metalliredigens (strain QYMF).